The chain runs to 155 residues: Short-chain-enoyl-CoA hydratase (155 aa).

It belongs to the enoyl-CoA hydratase/isomerase family.

It catalyses the reaction a short-chain (3S)-3-hydroxyacyl-CoA = a short-chain (2E)-enoyl-CoA + H2O. Its pathway is lipid metabolism; butanoate metabolism. The protein is Short-chain-enoyl-CoA hydratase (crt) of Clostridioides difficile (Peptoclostridium difficile).